Here is a 493-residue protein sequence, read N- to C-terminus: Involucrin (493 aa).

3 disordered regions span residues 1 to 47, 60 to 123, and 139 to 493; these read MSQQ…CQKV, EEKH…GQLE, and KRDE…GQHE. The span at 76–89 shows a compositional bias: low complexity; that stretch reads EQQQPQEQELQQQH. Composition is skewed to basic and acidic residues over residues 90-116, 139-151, 161-174, 184-193, and 201-213; these read WEQD…REKQ, KRDE…KEQL, QLKH…HLEL, NLEHQEKPLE, and QLKH…KPLE. Over residues 228–240 the composition is skewed to polar residues; it reads QEGQSELPEQQRG. Composition is skewed to basic and acidic residues over residues 250–270, 282–360, 372–386, 411–431, and 439–450; these read GQLK…HEEG, KHLE…HEGQ, KHLE…HPEQ, KHLE…EQLK, and QLKDLEQQERQL. A compositionally biased stretch (low complexity) spans 473–493; the sequence is GEVLLPVEQQQQKQEVQGQHE.

The protein belongs to the involucrin family. As to quaternary structure, directly or indirectly cross-linked to cornifelin (CNFN). In terms of processing, substrate of transglutaminase. Specific glutamines or lysines are cross-linked to keratins, desmoplakin and to inter involucrin molecules. As to expression, keratinocytes of epidermis and other stratified squamous epithelia.

Its subcellular location is the cytoplasm. Its function is as follows. Part of the insoluble cornified cell envelope (CE) of stratified squamous epithelia. The chain is Involucrin (IVL) from Saguinus oedipus (Cotton-top tamarin).